The primary structure comprises 447 residues: N-succinylarginine dihydrolase (447 aa).

Residues 19-28 (AGLSFGNVAS), asparagine 110, and 137-138 (HR) each bind substrate. Residue glutamate 174 is part of the active site. Arginine 214 is a binding site for substrate. Residue histidine 250 is part of the active site. Residues aspartate 252 and asparagine 364 each coordinate substrate. The active-site Nucleophile is the cysteine 370.

Belongs to the succinylarginine dihydrolase family. In terms of assembly, homodimer.

It catalyses the reaction N(2)-succinyl-L-arginine + 2 H2O + 2 H(+) = N(2)-succinyl-L-ornithine + 2 NH4(+) + CO2. It functions in the pathway amino-acid degradation; L-arginine degradation via AST pathway; L-glutamate and succinate from L-arginine: step 2/5. In terms of biological role, catalyzes the hydrolysis of N(2)-succinylarginine into N(2)-succinylornithine, ammonia and CO(2). The chain is N-succinylarginine dihydrolase from Idiomarina loihiensis (strain ATCC BAA-735 / DSM 15497 / L2-TR).